The primary structure comprises 72 residues: Conotoxin TxMMSK-04 (72 aa).

The first 20 residues, 1–20, serve as a signal peptide directing secretion; the sequence is MMSKLGVLLTICLLLFPLTA. The propeptide occupies 21 to 51; sequence VPLDGDQPADRPAERMQDGISSEHHPFFDSV. Residue Q55 is modified to Pyrrolidone carboxylic acid. 3 cysteine pairs are disulfide-bonded: C57/C71, C58/C67, and C63/C70. At P69 the chain carries 4-hydroxyproline. Position 71 is a cysteine amide (C71).

This sequence belongs to the conotoxin M superfamily. As to expression, expressed by the venom duct.

The protein localises to the secreted. The sequence is that of Conotoxin TxMMSK-04 from Conus textile (Cloth-of-gold cone).